Reading from the N-terminus, the 145-residue chain is D-aminoacyl-tRNA deacylase (145 aa).

The short motif at Gly-137–Pro-138 is the Gly-cisPro motif, important for rejection of L-amino acids element.

The protein belongs to the DTD family. As to quaternary structure, homodimer.

The protein resides in the cytoplasm. It catalyses the reaction glycyl-tRNA(Ala) + H2O = tRNA(Ala) + glycine + H(+). The enzyme catalyses a D-aminoacyl-tRNA + H2O = a tRNA + a D-alpha-amino acid + H(+). In terms of biological role, an aminoacyl-tRNA editing enzyme that deacylates mischarged D-aminoacyl-tRNAs. Also deacylates mischarged glycyl-tRNA(Ala), protecting cells against glycine mischarging by AlaRS. Acts via tRNA-based rather than protein-based catalysis; rejects L-amino acids rather than detecting D-amino acids in the active site. By recycling D-aminoacyl-tRNA to D-amino acids and free tRNA molecules, this enzyme counteracts the toxicity associated with the formation of D-aminoacyl-tRNA entities in vivo and helps enforce protein L-homochirality. The protein is D-aminoacyl-tRNA deacylase of Streptomyces avermitilis (strain ATCC 31267 / DSM 46492 / JCM 5070 / NBRC 14893 / NCIMB 12804 / NRRL 8165 / MA-4680).